We begin with the raw amino-acid sequence, 358 residues long: Gentisate 1,2-dioxygenase (358 aa).

The 67-residue stretch at 99–165 (QYLGPREVAP…VTDEPMAWLD (67 aa)) folds into the Cupin type-2 domain. The disordered stretch occupies residues 185-215 (DELSTRETPERSRGERLWGHPGLRPIGRPDQ). The span at 187 to 202 (LSTRETPERSRGERLW) shows a compositional bias: basic and acidic residues.

Belongs to the gentisate 1,2-dioxygenase family.

It carries out the reaction 2,5-dihydroxybenzoate + O2 = 3-maleylpyruvate + H(+). Involved in the degradation of salicylate via a pathway involving coenzyme A derivative. Catalyzes the oxygen-dependent ring fission of gentisate between the carboxyl and proximal hydroxyl groups at positions 1 and 2 of the aromatic ring to form maleylpyruvate. The substrate specificity is strong, since salicylate, catechol, protocatechuic acid, homogenetisate, 2,3-dihydroxybenzoate or 5-aminosalicylate cannot substitute for gentisate in the ring cleavage reaction. The sequence is that of Gentisate 1,2-dioxygenase from Streptomyces sp.